The following is a 1372-amino-acid chain: DNA-directed RNA polymerase subunit beta (1372 aa).

Belongs to the RNA polymerase beta chain family. In terms of assembly, the RNAP catalytic core consists of 2 alpha, 1 beta, 1 beta' and 1 omega subunit. When a sigma factor is associated with the core the holoenzyme is formed, which can initiate transcription.

The enzyme catalyses RNA(n) + a ribonucleoside 5'-triphosphate = RNA(n+1) + diphosphate. Its function is as follows. DNA-dependent RNA polymerase catalyzes the transcription of DNA into RNA using the four ribonucleoside triphosphates as substrates. The polypeptide is DNA-directed RNA polymerase subunit beta (Nitratidesulfovibrio vulgaris (strain ATCC 29579 / DSM 644 / CCUG 34227 / NCIMB 8303 / VKM B-1760 / Hildenborough) (Desulfovibrio vulgaris)).